Here is a 492-residue protein sequence, read N- to C-terminus: Excitatory amino acid transporter (492 aa).

Residues 1 to 7 (MVSWIRK) are Cytoplasmic-facing. Transmembrane regions (helical) follow at residues 8 to 28 (NLLLVLTVSSVVLGALCGFLL), 47 to 67 (LLMHMLKMMILPLIMSSLISG), and 85 to 105 (TYYMFTTAVAVVTGIFLVLVI). Residues 106–191 (HPGDPTIKKE…VKASVEYTSG (86 aa)) are Extracellular-facing. Asparagine 166 and asparagine 176 each carry an N-linked (GlcNAc...) asparagine glycan. The next 5 membrane-spanning stretches (helical) occupy residues 192-212 (MNVLGVIVFCIAIGISLSQLG), 228-248 (VIMKLVMTVMWYSPFGILCLI), 270-290 (VTVLSGLAIHSLISLPLIFFV), 358-378 (AVAAIFIAQINGVHLSFGQVV), and 389-409 (IGAASVPSAGLVTMLLVLTAV).

The protein belongs to the dicarboxylate/amino acid:cation symporter (DAACS) (TC 2.A.23) family.

The protein resides in the membrane. In terms of biological role, transports L-glutamate and also L- and D-aspartate. Essential for terminating the postsynaptic action of glutamate by rapidly removing released glutamate from the synaptic cleft. Acts as a symport by cotransporting sodium. The protein is Excitatory amino acid transporter (GLT-1) of Onchocerca volvulus.